The following is a 1065-amino-acid chain: Inversin (1065 aa).

ANK repeat units lie at residues 13–42 (SLAS…ALKD), 47–76 (FGRT…DVNK), 80–110 (SQRT…WMQK), 113–144 (EEMT…EVDT), 148–177 (NKQT…NIGI), 181–213 (EGKI…TESL), 220–250 (EGRT…NITS), 254–283 (LFRT…SGTI), 288–317 (QGAT…VKDD), 321–350 (EGRT…DIDI), 356–385 (YGGT…QVDA), 389–418 (MKHT…RVDL), 422–451 (DGHS…NPNV), 455–484 (AGRT…DPNI), 488–517 (EGRT…FPNQ), and 523–553 (ERYT…SIAA). 3-hydroxyasparagine is present on asparagine 75. The D-box 1 motif lies at 490-498 (RTALHWSCN). Residues 555–584 (QDIAAFKIQAVYKGYKVRKAFRDRKNLLMK) form the IQ 1 domain. A compositionally biased stretch (basic and acidic residues) spans 589–616 (RKDAAAKKREEENKRKEAEQQKGRRSPD). Disordered regions lie at residues 589 to 833 (RKDA…TPRN) and 847 to 886 (HLPQ…PLSG). A compositionally biased stretch (polar residues) spans 627–640 (PSTQDVPSRQSRAP). The residue at position 661 (serine 661) is a Phosphoserine. Positions 677–686 (SSDLQGTNSR) are enriched in polar residues. Composition is skewed to basic and acidic residues over residues 687-697 (RPNETAREHSK), 706-715 (RPNEGSDGSR), 723-736 (EKSR…ERCA), 752-762 (GPDEKGEDSRR), 770-786 (HDSH…EPKA), and 853-863 (EELRSGARRLE). The short motif at 909 to 917 (RKELFRKKN) is the D-box 2 element. Positions 916-945 (KNKAAAVIQRAWRSYQLRKHLSHLRHMKQL) constitute an IQ 2 domain. The interval 976 to 999 (TTAVSKAPKSPSKGTSGTKSTKHS) is disordered. Residues 983 to 994 (PKSPSKGTSGTK) show a composition bias toward low complexity.

As to quaternary structure, binds calmodulin via its IQ domains. Interacts with APC2. Interacts with alpha-, beta-, and gamma-catenin. Interacts with N-cadherin (CDH2). Interacts with microtubules. Interacts with NPHP1. Interacts with DVL1, PRICKLE (PRICKLE1 or PRICKLE2) and Strabismus (VANGL1 or VANGL2). Interacts with IQCB1; the interaction likely requires additional interactors. Component of a complex containing at least ANKS6, INVS, NEK8 and NPHP3. ANKS6 may organize complex assembly by linking INVS and NPHP3 to NEK8 and INVS may target the complex to the proximal ciliary axoneme. Post-translationally, may be ubiquitinated via its interaction with APC2. In terms of processing, hydroxylated at Asn-75, most probably by HIF1AN. Widely expressed. Strongly expressed in the primary cilia of renal tubular cells.

Its subcellular location is the cytoplasm. It is found in the cytoskeleton. The protein resides in the spindle. It localises to the membrane. The protein localises to the nucleus. Its subcellular location is the cell projection. It is found in the cilium. In terms of biological role, required for normal renal development and establishment of left-right axis. Probably acts as a molecular switch between different Wnt signaling pathways. Inhibits the canonical Wnt pathway by targeting cytoplasmic disheveled (DVL1) for degradation by the ubiquitin-proteasome. This suggests that it is required in renal development to oppose the repression of terminal differentiation of tubular epithelial cells by Wnt signaling. Involved in the organization of apical junctions in kidney cells together with NPHP1, NPHP4 and RPGRIP1L/NPHP8. Does not seem to be strictly required for ciliogenesis. This chain is Inversin (INVS), found in Homo sapiens (Human).